The sequence spans 240 residues: Putative F-box/kelch-repeat protein At2g29860 (240 aa).

Positions 1 to 20 (MVLLSEIPGGSNGDDPNMNP) are disordered. Residues 17–63 (NMNPQELPEELIESIVAPIPRCYYPSLSLLSRAFRHVITSQQLFVTR) form the F-box domain. 2 Kelch repeats span residues 120–165 (KIYV…VIDG) and 167–212 (IYVI…VTYA).

This is Putative F-box/kelch-repeat protein At2g29860 from Arabidopsis thaliana (Mouse-ear cress).